We begin with the raw amino-acid sequence, 130 residues long: Protein Wnt-9 (130 aa).

Ser-1 carries the O-palmitoleoyl serine; by PORCN lipid modification. The tract at residues 41 to 69 is disordered; the sequence is AGERTIARSRRRPREQRGQRRPKVSDGAL. Positions 47–62 are enriched in basic residues; sequence ARSRRRPREQRGQRRP. Asn-97 is a glycosylation site (N-linked (GlcNAc...) asparagine). An intrachain disulfide couples Cys-100 to Cys-111.

It belongs to the Wnt family. Post-translationally, palmitoleoylation is required for efficient binding to frizzled receptors. Depalmitoleoylation leads to Wnt signaling pathway inhibition.

It localises to the secreted. The protein localises to the extracellular space. Its subcellular location is the extracellular matrix. Functionally, ligand for members of the frizzled family of seven transmembrane receptors. Probable developmental protein. May be a signaling molecule which affects the development of discrete regions of tissues. Is likely to signal over only few cell diameters. The chain is Protein Wnt-9 (WNT-9) from Eptatretus stoutii (Pacific hagfish).